The chain runs to 335 residues: Tetraacyldisaccharide 4'-kinase (335 aa).

ATP is bound at residue 58-65 (TVGGSGKT).

It belongs to the LpxK family.

It catalyses the reaction a lipid A disaccharide + ATP = a lipid IVA + ADP + H(+). It participates in glycolipid biosynthesis; lipid IV(A) biosynthesis; lipid IV(A) from (3R)-3-hydroxytetradecanoyl-[acyl-carrier-protein] and UDP-N-acetyl-alpha-D-glucosamine: step 6/6. Functionally, transfers the gamma-phosphate of ATP to the 4'-position of a tetraacyldisaccharide 1-phosphate intermediate (termed DS-1-P) to form tetraacyldisaccharide 1,4'-bis-phosphate (lipid IVA). The chain is Tetraacyldisaccharide 4'-kinase from Shewanella sp. (strain MR-7).